Reading from the N-terminus, the 464-residue chain is tRNA modification GTPase MnmE (464 aa).

Arginine 25, glutamate 87, and lysine 130 together coordinate (6S)-5-formyl-5,6,7,8-tetrahydrofolate. Positions 226–386 constitute a TrmE-type G domain; sequence GLSVVLAGQP…LRAELLRIAG (161 aa). Asparagine 236 contacts K(+). Residues 236-241, 255-261, and 280-283 contribute to the GTP site; these read NVGKSS, TPIAGTT, and DTAG. Serine 240 lines the Mg(2+) pocket. K(+) contacts are provided by threonine 255, isoleucine 257, and threonine 260. Residue threonine 261 participates in Mg(2+) binding. Residue lysine 464 participates in (6S)-5-formyl-5,6,7,8-tetrahydrofolate binding.

It belongs to the TRAFAC class TrmE-Era-EngA-EngB-Septin-like GTPase superfamily. TrmE GTPase family. As to quaternary structure, homodimer. Heterotetramer of two MnmE and two MnmG subunits. K(+) serves as cofactor.

It localises to the cytoplasm. Its function is as follows. Exhibits a very high intrinsic GTPase hydrolysis rate. Involved in the addition of a carboxymethylaminomethyl (cmnm) group at the wobble position (U34) of certain tRNAs, forming tRNA-cmnm(5)s(2)U34. The sequence is that of tRNA modification GTPase MnmE from Burkholderia ambifaria (strain MC40-6).